Here is a 294-residue protein sequence, read N- to C-terminus: Ribosomal RNA small subunit methyltransferase H (294 aa).

S-adenosyl-L-methionine-binding positions include 31–33, Asp49, Phe76, Asp97, and Gln104; that span reads GGY.

This sequence belongs to the methyltransferase superfamily. RsmH family.

The protein localises to the cytoplasm. It catalyses the reaction cytidine(1402) in 16S rRNA + S-adenosyl-L-methionine = N(4)-methylcytidine(1402) in 16S rRNA + S-adenosyl-L-homocysteine + H(+). Specifically methylates the N4 position of cytidine in position 1402 (C1402) of 16S rRNA. The polypeptide is Ribosomal RNA small subunit methyltransferase H (Wolbachia pipientis subsp. Culex pipiens (strain wPip)).